Reading from the N-terminus, the 367-residue chain is Choline-phosphate cytidylyltransferase A (367 aa).

An N-acetylmethionine modification is found at Met-1. The interval 1–32 (MDAQSSAKVNSRKRRKEAPGPNGATEEDGIPS) is disordered. Lys-8 is modified (N6-acetyllysine). CTP contacts are provided by Ile-84, Phe-85, His-92, and Lys-122. Residues Lys-122 and Trp-151 each coordinate phosphocholine. Residues His-168, Asp-169, Tyr-173, Gln-195, Arg-196, Thr-197, and Ile-200 each coordinate CTP. 2 amphipathic regions span residues 228–287 (KELN…EFIG) and 298–315 (ALKHMLKEGKGRMLQAIS). Phosphoserine is present on Ser-233. The tract at residues 272–293 (IDLIQKWEEKSREFIGSFLEMF) is autoinhibitory (AI). The segment at 313 to 367 (AISPKQSPSSSPTHERSPSPSFRWPFSGKTSPSSSPASLSRCRAVTCDISEDEED) is disordered. Phosphoserine occurs at positions 315, 319, 321, 322, and 323. Polar residues predominate over residues 315 to 324 (SPKQSPSSSP). The stretch at 319 to 324 (SPSSSP) is repeat 1. The segment at 319–348 (SPSSSPTHERSPSPSFRWPFSGKTSPSSSP) is 3 X repeats. Thr-325 carries the post-translational modification Phosphothreonine. Phosphoserine is present on residues Ser-329, Ser-331, and Ser-333. One copy of the 2; approximate repeat lies at 329 to 333 (SPSPS). The segment covering 330-352 (PSPSFRWPFSGKTSPSSSPASLS) has biased composition (low complexity). Thr-342 carries the phosphothreonine modification. Ser-343, Ser-345, Ser-346, Ser-347, Ser-350, and Ser-352 each carry phosphoserine. The stretch at 343–348 (SPSSSP) is repeat 3. The residue at position 358 (Thr-358) is a Phosphothreonine. Ser-362 bears the Phosphoserine mark.

This sequence belongs to the cytidylyltransferase family. In terms of assembly, homodimer. Post-translationally, the serine residues of the C-terminus are phosphorylated. The inactive soluble form is stabilized by phosphorylation, the active membrane bound form is promoted by anionic lipids or diacylglycerol, and is stabilized by dephosphorylation. In terms of processing, monoubiquitinated by the SCF(FBXL2) complex, leading to proteasomal degradation. Brain and liver (at protein level). Also found in heart, kidney, spleen, lung, skeletal muscle, ovary and testis.

The protein resides in the cytoplasm. It localises to the cytosol. It is found in the membrane. The protein localises to the endoplasmic reticulum membrane. Its subcellular location is the nucleus. The catalysed reaction is phosphocholine + CTP + H(+) = CDP-choline + diphosphate. The protein operates within phospholipid metabolism; phosphatidylcholine biosynthesis; phosphatidylcholine from phosphocholine: step 1/2. With respect to regulation, interconverts between an inactive cytosolic form and an active membrane-bound form. Activation involves disruption of an inhibitory interaction between helices at the base of the active site and the autoinhibitory (AI) region. Catalyzes the key rate-limiting step in the CDP-choline pathway for phosphatidylcholine biosynthesis. This is Choline-phosphate cytidylyltransferase A (Pcyt1a) from Mus musculus (Mouse).